Reading from the N-terminus, the 222-residue chain is 2-hydroxypent-2,4-dienoate hydratase (222 aa).

This sequence belongs to the hydratase/decarboxylase family.

It functions in the pathway aromatic compound metabolism; benzoate degradation via hydroxylation. Conversion of 2-hydroxypent-2,4-dienoate into 4-hydroxy-2-oxopentanoate. The chain is 2-hydroxypent-2,4-dienoate hydratase (xylJ) from Pseudomonas putida (Arthrobacter siderocapsulatus).